The primary structure comprises 404 residues: Probable tRNA sulfurtransferase (404 aa).

A THUMP domain is found at 60 to 165; the sequence is TAVAESLKQV…EEAAYLSYET (106 aa). Residues 183–184, 208–209, Arg-265, Gly-287, and Gln-296 each bind ATP; these read ML and HF.

This sequence belongs to the ThiI family.

It localises to the cytoplasm. The enzyme catalyses [ThiI sulfur-carrier protein]-S-sulfanyl-L-cysteine + a uridine in tRNA + 2 reduced [2Fe-2S]-[ferredoxin] + ATP + H(+) = [ThiI sulfur-carrier protein]-L-cysteine + a 4-thiouridine in tRNA + 2 oxidized [2Fe-2S]-[ferredoxin] + AMP + diphosphate. It catalyses the reaction [ThiS sulfur-carrier protein]-C-terminal Gly-Gly-AMP + S-sulfanyl-L-cysteinyl-[cysteine desulfurase] + AH2 = [ThiS sulfur-carrier protein]-C-terminal-Gly-aminoethanethioate + L-cysteinyl-[cysteine desulfurase] + A + AMP + 2 H(+). Its pathway is cofactor biosynthesis; thiamine diphosphate biosynthesis. Functionally, catalyzes the ATP-dependent transfer of a sulfur to tRNA to produce 4-thiouridine in position 8 of tRNAs, which functions as a near-UV photosensor. Also catalyzes the transfer of sulfur to the sulfur carrier protein ThiS, forming ThiS-thiocarboxylate. This is a step in the synthesis of thiazole, in the thiamine biosynthesis pathway. The sulfur is donated as persulfide by IscS. This Streptococcus pneumoniae serotype 2 (strain D39 / NCTC 7466) protein is Probable tRNA sulfurtransferase.